Here is a 393-residue protein sequence, read N- to C-terminus: Probable tRNA sulfurtransferase (393 aa).

A THUMP domain is found at 61–168 (DEVIESLTRV…GDVINIYSIE (108 aa)). Residues 186 to 187 (LL), 211 to 212 (YF), R268, G290, and Q299 contribute to the ATP site.

This sequence belongs to the ThiI family.

The protein localises to the cytoplasm. The catalysed reaction is [ThiI sulfur-carrier protein]-S-sulfanyl-L-cysteine + a uridine in tRNA + 2 reduced [2Fe-2S]-[ferredoxin] + ATP + H(+) = [ThiI sulfur-carrier protein]-L-cysteine + a 4-thiouridine in tRNA + 2 oxidized [2Fe-2S]-[ferredoxin] + AMP + diphosphate. It carries out the reaction [ThiS sulfur-carrier protein]-C-terminal Gly-Gly-AMP + S-sulfanyl-L-cysteinyl-[cysteine desulfurase] + AH2 = [ThiS sulfur-carrier protein]-C-terminal-Gly-aminoethanethioate + L-cysteinyl-[cysteine desulfurase] + A + AMP + 2 H(+). It functions in the pathway cofactor biosynthesis; thiamine diphosphate biosynthesis. Its function is as follows. Catalyzes the ATP-dependent transfer of a sulfur to tRNA to produce 4-thiouridine in position 8 of tRNAs, which functions as a near-UV photosensor. Also catalyzes the transfer of sulfur to the sulfur carrier protein ThiS, forming ThiS-thiocarboxylate. This is a step in the synthesis of thiazole, in the thiamine biosynthesis pathway. The sulfur is donated as persulfide by IscS. The protein is Probable tRNA sulfurtransferase of Lachnospira eligens (strain ATCC 27750 / DSM 3376 / VPI C15-48 / C15-B4) (Eubacterium eligens).